We begin with the raw amino-acid sequence, 244 residues long: Carboxy-S-adenosyl-L-methionine synthase (244 aa).

S-adenosyl-L-methionine is bound by residues Tyr-41, 66–68, Asn-134, and Arg-201; that span reads GCS.

This sequence belongs to the class I-like SAM-binding methyltransferase superfamily. Cx-SAM synthase family. As to quaternary structure, homodimer.

It catalyses the reaction prephenate + S-adenosyl-L-methionine = carboxy-S-adenosyl-L-methionine + 3-phenylpyruvate + H2O. Functionally, catalyzes the conversion of S-adenosyl-L-methionine (SAM) to carboxy-S-adenosyl-L-methionine (Cx-SAM). In Cellvibrio japonicus (strain Ueda107) (Pseudomonas fluorescens subsp. cellulosa), this protein is Carboxy-S-adenosyl-L-methionine synthase.